A 286-amino-acid polypeptide reads, in one-letter code: NAD kinase (286 aa).

Aspartate 74 acts as the Proton acceptor in catalysis. NAD(+) is bound by residues aspartate 74–glycine 75, asparagine 148–aspartate 149, aspartate 178, alanine 186, threonine 189–serine 194, and glutamine 244.

It belongs to the NAD kinase family. A divalent metal cation is required as a cofactor.

The protein resides in the cytoplasm. The catalysed reaction is NAD(+) + ATP = ADP + NADP(+) + H(+). Functionally, involved in the regulation of the intracellular balance of NAD and NADP, and is a key enzyme in the biosynthesis of NADP. Catalyzes specifically the phosphorylation on 2'-hydroxyl of the adenosine moiety of NAD to yield NADP. This Campylobacter jejuni subsp. jejuni serotype O:23/36 (strain 81-176) protein is NAD kinase.